Consider the following 211-residue polypeptide: Large ribosomal subunit protein bL25 (211 aa).

The disordered stretch occupies residues 175-211 (VSEPVEQDLGEESETEEEGAEGEKPAESTGEEPGDDE). The span at 179–194 (VEQDLGEESETEEEGA) shows a compositional bias: acidic residues.

Belongs to the bacterial ribosomal protein bL25 family. CTC subfamily. In terms of assembly, part of the 50S ribosomal subunit; part of the 5S rRNA/L5/L18/L25 subcomplex. Contacts the 5S rRNA. Binds to the 5S rRNA independently of L5 and L18.

In terms of biological role, this is one of the proteins that binds to the 5S RNA in the ribosome where it forms part of the central protuberance. This Kocuria rhizophila (strain ATCC 9341 / DSM 348 / NBRC 103217 / DC2201) protein is Large ribosomal subunit protein bL25.